The following is a 177-amino-acid chain: Inorganic pyrophosphatase (177 aa).

Substrate-binding residues include Lys31, Arg45, and Tyr57. Mg(2+)-binding residues include Asp67, Asp72, and Asp104. Tyr141 contributes to the substrate binding site.

Belongs to the PPase family. In terms of assembly, homohexamer. Mg(2+) is required as a cofactor.

The protein resides in the cytoplasm. The catalysed reaction is diphosphate + H2O = 2 phosphate + H(+). In terms of biological role, catalyzes the hydrolysis of inorganic pyrophosphate (PPi) forming two phosphate ions. This is Inorganic pyrophosphatase from Halobacterium salinarum (strain ATCC 700922 / JCM 11081 / NRC-1) (Halobacterium halobium).